We begin with the raw amino-acid sequence, 61 residues long: uncharacterized protein (61 aa).

Positions 24-60 (WMRYESERDEKLRMLERMRDELEAELEEIKREIERLR) form a coiled coil.

This is an uncharacterized protein from Archaeoglobus fulgidus (strain ATCC 49558 / DSM 4304 / JCM 9628 / NBRC 100126 / VC-16).